The following is a 418-amino-acid chain: Serine/threonine-protein kinase Sgk1 (418 aa).

The tract at residues 50-78 is disordered; that stretch reads PQEPELLNENSSPPPSPSQQINLGPSSNP. Residues 68–78 are compositionally biased toward polar residues; the sequence is QQINLGPSSNP. In terms of domain architecture, Protein kinase spans 85–342; that stretch reads FQFLKIIGKG…FMEIKNHMFF (258 aa). ATP is bound by residues 91–99 and lysine 114; that span reads IGKGSFGKV. Residue aspartate 209 is the Proton acceptor of the active site. One can recognise an AGC-kinase C-terminal domain in the interval 343 to 418; sequence SPINWDDLIN…SYAPPMESYL (76 aa).

The protein belongs to the protein kinase superfamily. AGC Ser/Thr protein kinase family.

Its subcellular location is the cytoplasm. It is found in the nucleus. The protein resides in the endoplasmic reticulum. The catalysed reaction is L-seryl-[protein] + ATP = O-phospho-L-seryl-[protein] + ADP + H(+). The enzyme catalyses L-threonyl-[protein] + ATP = O-phospho-L-threonyl-[protein] + ADP + H(+). Functionally, protein kinase that may play an important role in cellular stress response. Plays an important role in activating certain potassium, sodium, and chloride channels, suggesting an involvement in the regulation of processes such as cell survival, neuronal excitability, and renal sodium excretion. The polypeptide is Serine/threonine-protein kinase Sgk1 (sgk1) (Xenopus tropicalis (Western clawed frog)).